Consider the following 186-residue polypeptide: MKKFSLIVAVCANGGIGIKGDLPWRLRQELKYFSRMTKKIQDSGKRNAIIMGRKTYFGVPESKRPLPERLNIILTRDPSANAYPSEVMVCTSMQEALKKLDEAPLVNEIENVWIVGGNAVYKEAMQSDRCHRIYLTEIKETFECDAFFPEITSDFQLVKNDDDVPEDIQEENGIQYQYRIYEKVPK.

The 181-residue stretch at 3 to 183 (KFSLIVAVCA…IQYQYRIYEK (181 aa)) folds into the DHFR domain. NADP(+) contacts are provided by residues alanine 9 and 15–21 (GIGIKGD). 29 to 34 (ELKYFS) provides a ligand contact to substrate. 53–55 (RKT) serves as a coordination point for NADP(+). Arginine 69 is a substrate binding site. NADP(+) contacts are provided by residues 75–77 (TRD) and 116–123 (GGNAVYKE).

Belongs to the dihydrofolate reductase family.

The enzyme catalyses (6S)-5,6,7,8-tetrahydrofolate + NADP(+) = 7,8-dihydrofolate + NADPH + H(+). Its pathway is cofactor biosynthesis; tetrahydrofolate biosynthesis; 5,6,7,8-tetrahydrofolate from 7,8-dihydrofolate: step 1/1. Its function is as follows. Key enzyme in folate metabolism. Catalyzes an essential reaction for de novo glycine and purine synthesis, and for DNA precursor synthesis. In Aedes albopictus (Asian tiger mosquito), this protein is Dihydrofolate reductase (DHFR).